The sequence spans 812 residues: Probable beta-glucosidase D (812 aa).

An N-terminal signal peptide occupies residues 1-18; it reads MRVPSLSVLSFLLGTALA. N-linked (GlcNAc...) asparagine glycosylation is found at Asn53 and Asn188. Residues 186 to 248 are disordered; sequence ETNRTGGMGG…GMGGGMAGSS (63 aa). Over residues 191 to 207 the composition is skewed to gly residues; it reads GGMGGGGGAPGGGGMGR. Positions 211 to 225 are enriched in polar residues; it reads FSSSVPGGMSPTSSA. The segment covering 236 to 245 has biased composition (gly residues); that stretch reads GGSGMGGGMA. N-linked (GlcNAc...) asparagine glycosylation is present at Asn296. Asp324 is a catalytic residue. 6 N-linked (GlcNAc...) asparagine glycosylation sites follow: Asn360, Asn384, Asn422, Asn501, Asn592, and Asn646.

The protein belongs to the glycosyl hydrolase 3 family.

Its subcellular location is the secreted. It carries out the reaction Hydrolysis of terminal, non-reducing beta-D-glucosyl residues with release of beta-D-glucose.. It functions in the pathway glycan metabolism; cellulose degradation. Its function is as follows. Beta-glucosidases are one of a number of cellulolytic enzymes involved in the degradation of cellulosic biomass. Catalyzes the last step releasing glucose from the inhibitory cellobiose. This chain is Probable beta-glucosidase D (bglD), found in Emericella nidulans (strain FGSC A4 / ATCC 38163 / CBS 112.46 / NRRL 194 / M139) (Aspergillus nidulans).